Here is a 328-residue protein sequence, read N- to C-terminus: Transcription factor bHLH84 (328 aa).

The disordered stretch occupies residues 145–248; the sequence is QCESSKKRTR…ASRGAATDPQ (104 aa). Positions 220-229 are enriched in basic and acidic residues; that stretch reads LSKEDGEDSK. Residues 243 to 292 enclose the bHLH domain; the sequence is AATDPQSLYARKRRERINERLRILQHLVPNGTKVDISTMLEEAVQYVKFL.

The protein belongs to the bHLH protein family. In terms of assembly, homodimer.

Its subcellular location is the nucleus. In Arabidopsis thaliana (Mouse-ear cress), this protein is Transcription factor bHLH84 (BHLH84).